Consider the following 556-residue polypeptide: Formate--tetrahydrofolate ligase 1 (556 aa).

65–72 (TPAGEGKS) contacts ATP.

Belongs to the formate--tetrahydrofolate ligase family.

It catalyses the reaction (6S)-5,6,7,8-tetrahydrofolate + formate + ATP = (6R)-10-formyltetrahydrofolate + ADP + phosphate. It participates in one-carbon metabolism; tetrahydrofolate interconversion. The protein is Formate--tetrahydrofolate ligase 1 of Streptococcus pyogenes serotype M28 (strain MGAS6180).